A 116-amino-acid polypeptide reads, in one-letter code: Large ribosomal subunit protein uL18 (116 aa).

Belongs to the universal ribosomal protein uL18 family. In terms of assembly, part of the 50S ribosomal subunit; part of the 5S rRNA/L5/L18/L25 subcomplex. Contacts the 5S and 23S rRNAs.

Functionally, this is one of the proteins that bind and probably mediate the attachment of the 5S RNA into the large ribosomal subunit, where it forms part of the central protuberance. The protein is Large ribosomal subunit protein uL18 of Teredinibacter turnerae (strain ATCC 39867 / T7901).